The chain runs to 130 residues: Large ribosomal subunit protein bL19 (130 aa).

It belongs to the bacterial ribosomal protein bL19 family.

In terms of biological role, this protein is located at the 30S-50S ribosomal subunit interface and may play a role in the structure and function of the aminoacyl-tRNA binding site. The protein is Large ribosomal subunit protein bL19 of Gluconobacter oxydans (strain 621H) (Gluconobacter suboxydans).